A 167-amino-acid polypeptide reads, in one-letter code: Ribosome-binding factor A (167 aa).

Residues 127-167 (SRANAQYAGDADPYKHDEPDDDDFDDDDDVEVEDWDDDDEA) are disordered. Acidic residues predominate over residues 145-167 (PDDDDFDDDDDVEVEDWDDDDEA).

Belongs to the RbfA family. Monomer. Binds 30S ribosomal subunits, but not 50S ribosomal subunits or 70S ribosomes.

It is found in the cytoplasm. In terms of biological role, one of several proteins that assist in the late maturation steps of the functional core of the 30S ribosomal subunit. Associates with free 30S ribosomal subunits (but not with 30S subunits that are part of 70S ribosomes or polysomes). Required for efficient processing of 16S rRNA. May interact with the 5'-terminal helix region of 16S rRNA. The polypeptide is Ribosome-binding factor A (Bifidobacterium adolescentis (strain ATCC 15703 / DSM 20083 / NCTC 11814 / E194a)).